A 188-amino-acid chain; its full sequence is Elongation factor P (188 aa).

Lys-34 is modified (N6-(3,6-diaminohexanoyl)-5-hydroxylysine).

It belongs to the elongation factor P family. In terms of processing, may be beta-lysylated on the epsilon-amino group of Lys-34 by the combined action of EpmA and EpmB, and then hydroxylated on the C5 position of the same residue by EpmC (if this protein is present). Lysylation is critical for the stimulatory effect of EF-P on peptide-bond formation. The lysylation moiety may extend toward the peptidyltransferase center and stabilize the terminal 3-CCA end of the tRNA. Hydroxylation of the C5 position on Lys-34 may allow additional potential stabilizing hydrogen-bond interactions with the P-tRNA.

The protein localises to the cytoplasm. It participates in protein biosynthesis; polypeptide chain elongation. Functionally, involved in peptide bond synthesis. Alleviates ribosome stalling that occurs when 3 or more consecutive Pro residues or the sequence PPG is present in a protein, possibly by augmenting the peptidyl transferase activity of the ribosome. Modification of Lys-34 is required for alleviation. In Pectobacterium atrosepticum (strain SCRI 1043 / ATCC BAA-672) (Erwinia carotovora subsp. atroseptica), this protein is Elongation factor P.